Here is a 181-residue protein sequence, read N- to C-terminus: Small ribosomal subunit protein bS16 (181 aa).

Positions 150–181 (KKAAEEAAKAAAEAPAEEAAPAEETATEAAAE) are disordered. Residues 158–181 (KAAAEAPAEEAAPAEETATEAAAE) are compositionally biased toward low complexity.

Belongs to the bacterial ribosomal protein bS16 family.

This is Small ribosomal subunit protein bS16 from Bacteroides fragilis (strain YCH46).